The chain runs to 199 residues: ATP-dependent Clp protease proteolytic subunit (199 aa).

S99 acts as the Nucleophile in catalysis. H124 is a catalytic residue.

Belongs to the peptidase S14 family. In terms of assembly, fourteen ClpP subunits assemble into 2 heptameric rings which stack back to back to give a disk-like structure with a central cavity, resembling the structure of eukaryotic proteasomes.

It is found in the cytoplasm. The catalysed reaction is Hydrolysis of proteins to small peptides in the presence of ATP and magnesium. alpha-casein is the usual test substrate. In the absence of ATP, only oligopeptides shorter than five residues are hydrolyzed (such as succinyl-Leu-Tyr-|-NHMec, and Leu-Tyr-Leu-|-Tyr-Trp, in which cleavage of the -Tyr-|-Leu- and -Tyr-|-Trp bonds also occurs).. Its function is as follows. Cleaves peptides in various proteins in a process that requires ATP hydrolysis. Has a chymotrypsin-like activity. Plays a major role in the degradation of misfolded proteins. This Lactococcus lactis subsp. lactis (strain IL1403) (Streptococcus lactis) protein is ATP-dependent Clp protease proteolytic subunit.